Here is a 365-residue protein sequence, read N- to C-terminus: Histidinol-phosphate aminotransferase (365 aa).

Lysine 227 carries the N6-(pyridoxal phosphate)lysine modification.

It belongs to the class-II pyridoxal-phosphate-dependent aminotransferase family. Histidinol-phosphate aminotransferase subfamily. Homodimer. Requires pyridoxal 5'-phosphate as cofactor.

It catalyses the reaction L-histidinol phosphate + 2-oxoglutarate = 3-(imidazol-4-yl)-2-oxopropyl phosphate + L-glutamate. Its pathway is amino-acid biosynthesis; L-histidine biosynthesis; L-histidine from 5-phospho-alpha-D-ribose 1-diphosphate: step 7/9. In Polaromonas naphthalenivorans (strain CJ2), this protein is Histidinol-phosphate aminotransferase.